The primary structure comprises 201 residues: MAGKKKSKSEALPLDLDNIKPMDHLQPVPKTRSSSITSIESADEPGTMKQVLLPPTIKEFDELEQFESFVRDETWDNDFDYFHGRLHYYPPFVMKSCQNNLEKIKPTMNKNSKKFRRDLQHHIQKHLIKDLEKCCGYELNFGKGEVVETDNKVTWKFKDETDHGFSKEEEDMYDRHWRLELDVSCTNESAMVDVEYKSIPM.

A disordered region spans residues 1–45 (MAGKKKSKSEALPLDLDNIKPMDHLQPVPKTRSSSITSIESADEP). Over residues 31–40 (TRSSSITSIE) the composition is skewed to polar residues.

It belongs to the RGI1 family.

It is found in the cell membrane. Functionally, involved in the control of energetic metabolism and significantly contribute to cell fitness, especially under respiratory growth conditions. This chain is Respiratory growth induced protein 1 (RGI1), found in Candida albicans (strain SC5314 / ATCC MYA-2876) (Yeast).